Reading from the N-terminus, the 330-residue chain is Methionyl-tRNA formyltransferase (330 aa).

117–120 (SLLP) provides a ligand contact to (6S)-5,6,7,8-tetrahydrofolate.

Belongs to the Fmt family.

It carries out the reaction L-methionyl-tRNA(fMet) + (6R)-10-formyltetrahydrofolate = N-formyl-L-methionyl-tRNA(fMet) + (6S)-5,6,7,8-tetrahydrofolate + H(+). In terms of biological role, attaches a formyl group to the free amino group of methionyl-tRNA(fMet). The formyl group appears to play a dual role in the initiator identity of N-formylmethionyl-tRNA by promoting its recognition by IF2 and preventing the misappropriation of this tRNA by the elongation apparatus. In Verminephrobacter eiseniae (strain EF01-2), this protein is Methionyl-tRNA formyltransferase.